The sequence spans 226 residues: Lysoplasmalogenase TMEM86B (226 aa).

The Cytoplasmic portion of the chain corresponds to 1–23 (MDARKEGLPLETLFSDQYPQVRR). A helical transmembrane segment spans residues 24-40 (WLAPFILACSLYFLLWI). Over 41–46 (PVDQPS) the chain is Extracellular. A helical transmembrane segment spans residues 47–68 (WVSALIKCQPILCLVVFLWAVA). Topologically, residues 69-74 (PGGSST) are cytoplasmic. The chain crosses the membrane as a helical span at residues 75 to 93 (WLLQGALVCSAVGDACLIW). The Extracellular portion of the chain corresponds to 94-99 (PEAFFY). Residues 100-117 (GTAAFSVAHLFYLGAFGL) traverse the membrane as a helical segment. Residues 118–123 (TPLQPG) are Cytoplasmic-facing. Residues 124–140 (LLLCTTLASLTYYSFLL) traverse the membrane as a helical segment. Residues 141–146 (LHLEQG) lie on the Extracellular side of the membrane. The chain crosses the membrane as a helical span at residues 147-163 (MVLPVMAYGLILNSMLW). The Cytoplasmic portion of the chain corresponds to 164–171 (RSLVWGGS). Residues 172–188 (ASWGAVLFTFSDGVLAW) traverse the membrane as a helical segment. Over 189 to 199 (DTFVYSLPFAR) the chain is Extracellular. Residues 200–218 (LVTMSTYYAAQLLLILSAL) traverse the membrane as a helical segment. Residues 219 to 226 (RNPGLKTH) are Cytoplasmic-facing.

It belongs to the TMEM86 family. As to quaternary structure, homodimer. As to expression, enriched in liver. Also detected in brain and testis.

The protein resides in the endoplasmic reticulum membrane. Its subcellular location is the cytoplasm. It carries out the reaction a 1-O-(1Z-alkenyl)-sn-glycero-3-phosphocholine + H2O = a 2,3-saturated aldehyde + sn-glycerol 3-phosphocholine. The catalysed reaction is a 1-O-(1Z-alkenyl)-sn-glycero-3-phosphoethanolamine + H2O = a 2,3-saturated aldehyde + sn-glycero-3-phosphoethanolamine. With respect to regulation, competitively inhibited by lysophosphatidic acid. Catalyzes the hydrolysis of the vinyl ether bond of choline or ethanolamine lysoplasmalogens, forming fatty aldehyde and glycerophosphocholine or glycerophosphoethanolamine, respectively and is specific for the sn-2-deacylated (lyso) form of plasmalogen. In Mus musculus (Mouse), this protein is Lysoplasmalogenase TMEM86B (Tmem86b).